Consider the following 392-residue polypeptide: Chorismate synthase (392 aa).

Positions 40 and 46 each coordinate NADP(+). FMN-binding positions include 135 to 137 (RAS), 256 to 257 (QA), G300, 315 to 319 (KPISS), and R341.

It belongs to the chorismate synthase family. In terms of assembly, homotetramer. It depends on FMNH2 as a cofactor.

It catalyses the reaction 5-O-(1-carboxyvinyl)-3-phosphoshikimate = chorismate + phosphate. Its pathway is metabolic intermediate biosynthesis; chorismate biosynthesis; chorismate from D-erythrose 4-phosphate and phosphoenolpyruvate: step 7/7. In terms of biological role, catalyzes the anti-1,4-elimination of the C-3 phosphate and the C-6 proR hydrogen from 5-enolpyruvylshikimate-3-phosphate (EPSP) to yield chorismate, which is the branch point compound that serves as the starting substrate for the three terminal pathways of aromatic amino acid biosynthesis. This reaction introduces a second double bond into the aromatic ring system. The polypeptide is Chorismate synthase (Salinispora tropica (strain ATCC BAA-916 / DSM 44818 / JCM 13857 / NBRC 105044 / CNB-440)).